A 177-amino-acid chain; its full sequence is Keratin-associated protein 1-1 (177 aa).

This sequence belongs to the KRTAP type 1 family. As to quaternary structure, interacts with hair keratins. As to expression, expressed in the middle/upper portions of the hair cortex, in the region termed the keratogenous zone.

In terms of biological role, in the hair cortex, hair keratin intermediate filaments are embedded in an interfilamentous matrix, consisting of hair keratin-associated proteins (KRTAP), which are essential for the formation of a rigid and resistant hair shaft through their extensive disulfide bond cross-linking with abundant cysteine residues of hair keratins. The matrix proteins include the high-sulfur and high-glycine-tyrosine keratins. The protein is Keratin-associated protein 1-1 (KRTAP1-1) of Homo sapiens (Human).